We begin with the raw amino-acid sequence, 539 residues long: Chaperonin GroEL (539 aa).

ATP is bound by residues Thr29–Pro32, Asp86–Thr90, Gly413, Asn476–Ala478, and Asp492.

Belongs to the chaperonin (HSP60) family. Forms a cylinder of 14 subunits composed of two heptameric rings stacked back-to-back. Interacts with the co-chaperonin GroES.

Its subcellular location is the cytoplasm. The catalysed reaction is ATP + H2O + a folded polypeptide = ADP + phosphate + an unfolded polypeptide.. In terms of biological role, together with its co-chaperonin GroES, plays an essential role in assisting protein folding. The GroEL-GroES system forms a nano-cage that allows encapsulation of the non-native substrate proteins and provides a physical environment optimized to promote and accelerate protein folding. This Geobacillus sp. (strain WCH70) protein is Chaperonin GroEL.